A 359-amino-acid polypeptide reads, in one-letter code: Peptide chain release factor 1 (359 aa).

N5-methylglutamine is present on glutamine 236.

Belongs to the prokaryotic/mitochondrial release factor family. Post-translationally, methylated by PrmC. Methylation increases the termination efficiency of RF1.

Its subcellular location is the cytoplasm. In terms of biological role, peptide chain release factor 1 directs the termination of translation in response to the peptide chain termination codons UAG and UAA. The sequence is that of Peptide chain release factor 1 from Streptococcus pyogenes serotype M18 (strain MGAS8232).